A 280-amino-acid polypeptide reads, in one-letter code: Myelin proteolipid protein A (280 aa).

Residues 1–10 lie on the Cytoplasmic side of the membrane; it reads MGWHDGCIRC. 2 S-palmitoyl cysteine lipidation sites follow: Cys-7 and Cys-10. Residues 11-36 form a helical membrane-spanning segment; that stretch reads MVGVPFASVIATVLCFAGVALFCGCG. The Extracellular segment spans residues 37-59; sequence HEALSGTEKLIETYFSKNYQEYE. Residues 60–88 traverse the membrane as a helical segment; sequence YLIHVINAFQYVIYGIAIFFFLFGILLLA. Topologically, residues 89 to 152 are cytoplasmic; that stretch reads EGFYTTTAIK…LGKWLGHPDK (64 aa). 2 S-palmitoyl cysteine lipidation sites follow: Cys-140 and Cys-142. The helical transmembrane segment at 153–179 threads the bilayer; sequence FVGVTYIITILWILIFACSAVPVYIYF. The Extracellular portion of the chain corresponds to 180 to 239; sequence NTWVTCQSIAFPGKTTTSVSTLCSDARMYGVLPWNAFPGKVCGTSLLAICKTSEFQMTFH. 2 disulfides stabilise this stretch: Cys-185–Cys-229 and Cys-202–Cys-221. A helical transmembrane segment spans residues 240–269; that stretch reads LFIAAFVGAAATLVALLTYMVGASFNYAVL. The Cytoplasmic segment spans residues 270–280; the sequence is RVTGRSDRSKF.

Belongs to the myelin proteolipid protein family.

It localises to the cell membrane. This is the major myelin protein from the central nervous system. It plays an important role in the formation or maintenance of the multilamellar structure of myelin. The sequence is that of Myelin proteolipid protein A (plp1-a) from Xenopus laevis (African clawed frog).